A 176-amino-acid chain; its full sequence is Ferritin, middle subunit (176 aa).

The Ferritin-like diiron domain occupies 7 to 156 (QNYHRDCEAA…DFITNLSRMD (150 aa)). Residues E24, E59, H62, E104, and Q138 each contribute to the Fe cation site.

Belongs to the ferritin family. In terms of assembly, in liver, forms a heteromer consisting of middle and heavy subunits. In spleen, forms a homomer. The functional molecule forms a roughly spherical shell with a diameter of 12 nm and contains a central cavity into which the insoluble mineral iron core is deposited. As to expression, liver and spleen (at protein level).

The enzyme catalyses 4 Fe(2+) + O2 + 4 H(+) = 4 Fe(3+) + 2 H2O. Its function is as follows. Stores iron in a soluble, non-toxic, readily available form. Important for iron homeostasis. Has ferroxidase activity. Iron is taken up in the ferrous form and deposited as ferric hydroxides after oxidation. The protein is Ferritin, middle subunit of Trematomus newnesi (Dusky notothen).